A 123-amino-acid chain; its full sequence is Snaclec GPIB-binding protein subunit beta (123 aa).

Disulfide bonds link cysteine 2–cysteine 13, cysteine 30–cysteine 119, and cysteine 96–cysteine 111. The region spanning 9 to 120 is the C-type lectin domain; sequence YGGHCYKLFK…CTRLQYFVCE (112 aa).

The protein belongs to the snaclec family. In terms of assembly, heterodimer of subunits alpha and beta; disulfide-linked. In terms of tissue distribution, expressed by the venom gland.

It is found in the secreted. In terms of biological role, binds to platelet GPIb (subunit alpha) (GP1BA) and functions as a receptor blocker for vWF binding to GPIb. The platelet GPIb-binding site resides on the GPIB-BP subunit beta and not on the alpha subunit. At a final concentration of 104 nM totally abolishes vWF-dependent shear-induced platelet aggregation (SIPA) at a high shear stress, but had no effect on SIPA at a low shear stress. The polypeptide is Snaclec GPIB-binding protein subunit beta (Bothrops jararaca (Jararaca)).